We begin with the raw amino-acid sequence, 129 residues long: MARVKRALNAQKKRRTVLKASKGYRGQRSRLYRKAKEQQLHSLTYAYRDRRARKGEFRKLWISRINAAARANDITYNRLIQGLKAAGVEVDRKNLAELAVSDPAAFTALVDVARAALPEDVNAPSGEAA.

This sequence belongs to the bacterial ribosomal protein bL20 family.

Its function is as follows. Binds directly to 23S ribosomal RNA and is necessary for the in vitro assembly process of the 50S ribosomal subunit. It is not involved in the protein synthesizing functions of that subunit. The protein is Large ribosomal subunit protein bL20 of Mycolicibacterium smegmatis (strain ATCC 700084 / mc(2)155) (Mycobacterium smegmatis).